A 603-amino-acid chain; its full sequence is O-acetyltransferase OatA (603 aa).

11 helical membrane-spanning segments follow: residues Tyr-17–Leu-37, Gly-45–Ile-65, Leu-87–Pro-107, Leu-148–Leu-168, Ile-177–Phe-197, Thr-211–Leu-231, Ile-239–Phe-259, Ile-268–Val-288, Tyr-311–Gly-331, Ile-333–Tyr-353, and Val-382–Leu-402. Residues Ser-453, Asp-575, and His-578 contribute to the active site.

The protein belongs to the acyltransferase 3 family. As to quaternary structure, monomer.

The protein resides in the cell membrane. Functionally, responsible for O-acetylation at the C(6)-hydroxyl group of N-acetylmuramyl residues, forming the corresponding N,6-O-diacetylmuramic acid of the peptidoglycan. O-acetylation of the peptidoglycan is the major determinant for lysozyme resistance. In Staphylococcus aureus (strain NCTC 8325 / PS 47), this protein is O-acetyltransferase OatA.